A 443-amino-acid chain; its full sequence is Probable glycine dehydrogenase (decarboxylating) subunit 1 (443 aa).

Belongs to the GcvP family. N-terminal subunit subfamily. The glycine cleavage system is composed of four proteins: P, T, L and H. In this organism, the P 'protein' is a heterodimer of two subunits.

The catalysed reaction is N(6)-[(R)-lipoyl]-L-lysyl-[glycine-cleavage complex H protein] + glycine + H(+) = N(6)-[(R)-S(8)-aminomethyldihydrolipoyl]-L-lysyl-[glycine-cleavage complex H protein] + CO2. Its function is as follows. The glycine cleavage system catalyzes the degradation of glycine. The P protein binds the alpha-amino group of glycine through its pyridoxal phosphate cofactor; CO(2) is released and the remaining methylamine moiety is then transferred to the lipoamide cofactor of the H protein. The sequence is that of Probable glycine dehydrogenase (decarboxylating) subunit 1 from Chloroherpeton thalassium (strain ATCC 35110 / GB-78).